The following is a 371-amino-acid chain: Aldose sugar dehydrogenase YliI (371 aa).

The N-terminal stretch at 1–20 (MHRQSFFLVPLICLSSALWA) is a signal peptide. Gln82 is a pyrroloquinoline quinone binding site. His147 serves as the catalytic Proton acceptor. Residues 214 to 215 (RN) form a PQQ region. Ca(2+)-binding residues include Glu240 and Tyr250. Tyr261 is a binding site for pyrroloquinoline quinone. PQQ stretches follow at residues 312–314 (ALK) and 341–343 (RIR).

This sequence belongs to the PQQ oxidoreductase GdhB family. Monomer. Ca(2+) serves as cofactor. Pyrroloquinoline quinone is required as a cofactor.

The protein localises to the cell outer membrane. Functionally, aldose sugar dehydrogenase with broad substrate specificity. The physiological substrate is unknown. Can oxidize glucose to gluconolactone. Can also utilize D-arabinose, L-arabinose and 2-deoxy-glucose. Has higher activity towards oligomeric sugars, such as maltose, maltotriose or cellobiose. It may function to input sugar-derived electrons into the respiratory network. This Escherichia coli (strain K12) protein is Aldose sugar dehydrogenase YliI (yliI).